We begin with the raw amino-acid sequence, 587 residues long: MFS-type transporter opaD (587 aa).

The next 9 helical transmembrane spans lie at 87 to 107, 124 to 146, 153 to 173, 184 to 204, 214 to 234, 242 to 262, 284 to 304, 315 to 335, and 357 to 377; these read VAIM…NTIL, MGWY…GKLL, WVYI…GVSP, ISGT…TIIV, GILS…GGAF, WCFY…LLLF, IIGL…LQWG, IIAL…VEYW, and LFTF…PIWF. A glycan (N-linked (GlcNAc...) asparagine) is linked at asparagine 382. 5 consecutive transmembrane segments (helical) span residues 393–413, 414–434, 447–467, 483–503, and 554–574; these read IPLI…VTTL, GYYI…AGLL, IGFQ…PLVV, LVTL…QSVF, and VYLV…PIRW.

Belongs to the major facilitator superfamily. TCR/Tet family.

It is found in the membrane. Functionally, MFS-type transporter; part of the gene cluster that mediates the biosynthesis of oxepinamides, derivatives of anthranilyl-containing tripeptides that share an oxepin ring and a fused pyrimidinone moiety. The sequence is that of MFS-type transporter opaD from Aspergillus ustus.